A 227-amino-acid chain; its full sequence is Cytochrome c oxidase subunit 2 (227 aa).

Residues 1 to 14 (MAYPMQLGFQDATS) lie on the Mitochondrial intermembrane side of the membrane. Residues 15–45 (PIMEELLHFHDHTLMIVLLISSLVLYIISLM) traverse the membrane as a helical segment. The Mitochondrial matrix portion of the chain corresponds to 46 to 59 (LTTKLTHTSTMDAQ). Residues 60–87 (EVETIWTILPAIILILIALPSLRILYMM) traverse the membrane as a helical segment. Over 88 to 227 (DEINNPSLTV…YFEKWSASML (140 aa)) the chain is Mitochondrial intermembrane. The Cu cation site is built by His-161, Cys-196, Glu-198, Cys-200, His-204, and Met-207. Mg(2+) is bound at residue Glu-198. Tyr-218 carries the phosphotyrosine modification.

This sequence belongs to the cytochrome c oxidase subunit 2 family. As to quaternary structure, component of the cytochrome c oxidase (complex IV, CIV), a multisubunit enzyme composed of 14 subunits. The complex is composed of a catalytic core of 3 subunits MT-CO1, MT-CO2 and MT-CO3, encoded in the mitochondrial DNA, and 11 supernumerary subunits COX4I, COX5A, COX5B, COX6A, COX6B, COX6C, COX7A, COX7B, COX7C, COX8 and NDUFA4, which are encoded in the nuclear genome. The complex exists as a monomer or a dimer and forms supercomplexes (SCs) in the inner mitochondrial membrane with NADH-ubiquinone oxidoreductase (complex I, CI) and ubiquinol-cytochrome c oxidoreductase (cytochrome b-c1 complex, complex III, CIII), resulting in different assemblies (supercomplex SCI(1)III(2)IV(1) and megacomplex MCI(2)III(2)IV(2)). Found in a complex with TMEM177, COA6, COX18, COX20, SCO1 and SCO2. Interacts with TMEM177 in a COX20-dependent manner. Interacts with COX20. Interacts with COX16. Cu cation is required as a cofactor.

The protein localises to the mitochondrion inner membrane. The enzyme catalyses 4 Fe(II)-[cytochrome c] + O2 + 8 H(+)(in) = 4 Fe(III)-[cytochrome c] + 2 H2O + 4 H(+)(out). Component of the cytochrome c oxidase, the last enzyme in the mitochondrial electron transport chain which drives oxidative phosphorylation. The respiratory chain contains 3 multisubunit complexes succinate dehydrogenase (complex II, CII), ubiquinol-cytochrome c oxidoreductase (cytochrome b-c1 complex, complex III, CIII) and cytochrome c oxidase (complex IV, CIV), that cooperate to transfer electrons derived from NADH and succinate to molecular oxygen, creating an electrochemical gradient over the inner membrane that drives transmembrane transport and the ATP synthase. Cytochrome c oxidase is the component of the respiratory chain that catalyzes the reduction of oxygen to water. Electrons originating from reduced cytochrome c in the intermembrane space (IMS) are transferred via the dinuclear copper A center (CU(A)) of subunit 2 and heme A of subunit 1 to the active site in subunit 1, a binuclear center (BNC) formed by heme A3 and copper B (CU(B)). The BNC reduces molecular oxygen to 2 water molecules using 4 electrons from cytochrome c in the IMS and 4 protons from the mitochondrial matrix. This Bubalus depressicornis (Lowland anoa) protein is Cytochrome c oxidase subunit 2 (MT-CO2).